Here is a 551-residue protein sequence, read N- to C-terminus: Terpene synthase 10 (551 aa).

Residues Asp303, Asp307, and Glu455 each coordinate Mg(2+). Residues 303–307 carry the DDXXD motif motif; the sequence is DDIYD.

It belongs to the terpene synthase family. Mg(2+) is required as a cofactor.

In terms of biological role, catalyzes the cyclization of farnesyl diphosphate to sesquiterpene olefins. This is Terpene synthase 10 (TPS10) from Ricinus communis (Castor bean).